We begin with the raw amino-acid sequence, 571 residues long: Streptolysin O (571 aa).

The N-terminal stretch at 1–33 (MSNKKTFKKYSRVAGLLTVALIIGNLVTANAES) is a signal peptide. Disordered regions lie at residues 32-56 (ESNK…ESSE) and 81-108 (KEMP…HTEE). Over residues 37 to 48 (NTASTETTTTNE) the composition is skewed to low complexity. 4 beta stranded membrane passes run 260 to 273 (KSQI…NSKI), 280 to 289 (IDFKSISKGE), 358 to 367 (SNDVEAAFSA), and 375 to 387 (KTNG…LENS). Residues 529–539 (ECTGLAWEWWR) carry the Conserved undecapeptide motif. Position 561 (Thr-561) is a short sequence motif, cholesterol binding.

This sequence belongs to the cholesterol-dependent cytolysin family. Homooligomeric pore complex of 35 to 50 subunits; when inserted in the host membrane.

Its subcellular location is the secreted. It is found in the host cell membrane. Its function is as follows. A cholesterol-dependent toxin that causes cytolysis by forming pores in cholesterol containing host membranes. After binding to target membranes, the protein undergoes a major conformation change, leading to its insertion in the host membrane and formation of an oligomeric pore complex. Cholesterol is required for binding to host membranes, membrane insertion and pore formation; cholesterol binding is mediated by a Thr-Leu pair in the C-terminus. Can be reversibly inactivated by oxidation. This Streptococcus pyogenes serotype M6 (strain ATCC BAA-946 / MGAS10394) protein is Streptolysin O (slo).